Here is a 517-residue protein sequence, read N- to C-terminus: DNA-directed RNA polymerase subunit alpha (517 aa).

This sequence belongs to the RNA polymerase alpha chain family. In plastids the minimal PEP RNA polymerase catalytic core is composed of four subunits: alpha, beta, beta', and beta''. When a (nuclear-encoded) sigma factor is associated with the core the holoenzyme is formed, which can initiate transcription.

Its subcellular location is the plastid. The protein resides in the chloroplast. It carries out the reaction RNA(n) + a ribonucleoside 5'-triphosphate = RNA(n+1) + diphosphate. Functionally, DNA-dependent RNA polymerase catalyzes the transcription of DNA into RNA using the four ribonucleoside triphosphates as substrates. The polypeptide is DNA-directed RNA polymerase subunit alpha (rpoA) (Stigeoclonium helveticum (Green alga)).